We begin with the raw amino-acid sequence, 65 residues long: Potassium channel toxin alpha-KTx 12.6 (65 aa).

A signal peptide spans 1-22 (MKMKIFIITIVIALFITSIVEA). Intrachain disulfides connect Cys-30/Cys-51, Cys-36/Cys-56, and Cys-40/Cys-58.

This sequence belongs to the short scorpion toxin superfamily. Potassium channel inhibitor family. Alpha-KTx 12 subfamily. In terms of tissue distribution, expressed by the venom gland.

The protein localises to the secreted. Inhibits voltage-gated potassium channels. This chain is Potassium channel toxin alpha-KTx 12.6, found in Lychas mucronatus (Chinese swimming scorpion).